The following is a 902-amino-acid chain: Magnesium-transporting ATPase, P-type 1 (902 aa).

The Cytoplasmic segment spans residues 1–98 (MLKIITRQLF…KPSPWWVHLW (98 aa)). Residues 99 to 119 (VCYRNPFNILLTILGGISYAT) form a helical membrane-spanning segment. Position 120 (E120) is a topological domain, extracellular. A helical transmembrane segment spans residues 121 to 141 (DLFAAGVIALMVGISTLLNFV). Topologically, residues 142–291 (QEARSTKAAD…QNAFQKGISR (150 aa)) are cytoplasmic. Residues 292 to 312 (VSMLLIRFMLVMAPVVLIING) form a helical membrane-spanning segment. At 313 to 321 (YTKGDWWEA) the chain is on the extracellular side. A helical transmembrane segment spans residues 322 to 339 (ALFALSVAVGLTPEMLPM). E335 lines the Mg(2+) pocket. At 340–699 (IVTSTLARGA…IEGRRTFSNM (360 aa)) the chain is on the cytoplasmic side. The 4-aspartylphosphate intermediate role is filled by D377. Residues D645, D649, and N713 each coordinate Mg(2+). A helical transmembrane segment spans residues 700 to 719 (LKYIKMTASSNFGNVFSVLV). Residues 720-728 (ASAFLPFLP) are Extracellular-facing. Residues 729–748 (MLPLHLLIQNLLYDVSQVAI) form a helical membrane-spanning segment. 2 residues coordinate Mg(2+): N738 and D742. Over 749 to 770 (PFDNVDEEQIQKPQRWNPADLG) the chain is Cytoplasmic. The chain crosses the membrane as a helical span at residues 771-794 (RFMVFFGPISSIFDILTFCLMWWV). The Extracellular segment spans residues 795-803 (FHANTPETQ). The helical transmembrane segment at 804–822 (TLFQSGWFVVGLLSQTLIV) threads the bilayer. At 823 to 835 (HMIRTRRLPFIQS) the chain is on the cytoplasmic side. A helical transmembrane segment spans residues 836–855 (RAAWPLMAMTLLVMVVGVSL). At 856–870 (PFSPLASYLQLQALP) the chain is on the extracellular side. Residues 871–890 (LSYFPWLIAILVGYMTLTQL) form a helical membrane-spanning segment. The Cytoplasmic portion of the chain corresponds to 891 to 902 (VKGFYSRRYGWQ).

Belongs to the cation transport ATPase (P-type) (TC 3.A.3) family. Type IIIB subfamily.

It localises to the cell inner membrane. It catalyses the reaction Mg(2+)(out) + ATP + H2O = Mg(2+)(in) + ADP + phosphate + H(+). In terms of biological role, mediates magnesium influx to the cytosol. The chain is Magnesium-transporting ATPase, P-type 1 (mgtA) from Salmonella typhimurium (strain 14028s / SGSC 2262).